Consider the following 154-residue polypeptide: 6,7-dimethyl-8-ribityllumazine synthase (154 aa).

5-amino-6-(D-ribitylamino)uracil is bound by residues F22, 56 to 58 (SFE), and 80 to 82 (AVI). 85–86 (ST) lines the (2S)-2-hydroxy-3-oxobutyl phosphate pocket. Catalysis depends on H88, which acts as the Proton donor. Y113 contributes to the 5-amino-6-(D-ribitylamino)uracil binding site. R127 serves as a coordination point for (2S)-2-hydroxy-3-oxobutyl phosphate.

It belongs to the DMRL synthase family. In terms of assembly, forms an icosahedral capsid composed of 60 subunits, arranged as a dodecamer of pentamers.

It carries out the reaction (2S)-2-hydroxy-3-oxobutyl phosphate + 5-amino-6-(D-ribitylamino)uracil = 6,7-dimethyl-8-(1-D-ribityl)lumazine + phosphate + 2 H2O + H(+). It functions in the pathway cofactor biosynthesis; riboflavin biosynthesis; riboflavin from 2-hydroxy-3-oxobutyl phosphate and 5-amino-6-(D-ribitylamino)uracil: step 1/2. Catalyzes the formation of 6,7-dimethyl-8-ribityllumazine by condensation of 5-amino-6-(D-ribitylamino)uracil with 3,4-dihydroxy-2-butanone 4-phosphate. This is the penultimate step in the biosynthesis of riboflavin. The polypeptide is 6,7-dimethyl-8-ribityllumazine synthase (Persephonella marina (strain DSM 14350 / EX-H1)).